Consider the following 465-residue polypeptide: Serine carboxypeptidase-like 46 (465 aa).

An N-terminal signal peptide occupies residues 1-25; the sequence is MPRLQCLTMATSLILLLQALSLVSS. 3 disulfides stabilise this stretch: Cys-88–Cys-344, Cys-245–Cys-263, and Cys-288–Cys-313. 2 N-linked (GlcNAc...) asparagine glycosylation sites follow: Asn-137 and Asn-170. Ser-179 is an active-site residue. Asn-246 carries N-linked (GlcNAc...) asparagine glycosylation. Active-site residues include Asp-381 and His-438.

Belongs to the peptidase S10 family. In terms of tissue distribution, ubiquitous.

The protein resides in the secreted. Functionally, probable carboxypeptidase. The protein is Serine carboxypeptidase-like 46 (SCPL46) of Arabidopsis thaliana (Mouse-ear cress).